The sequence spans 348 residues: Olfactory receptor 2T4 (348 aa).

The Extracellular segment spans residues 1-57 (MDNITWMASHTGWSDFILMGLFRQSKHPMANITWMANHTGWSDFILLGLFRQSKHPA). N-linked (GlcNAc...) asparagine glycans are attached at residues Asn-31 and Asn-37. Residues 58-81 (LLCVVIFVVFLMALSGNAVLILLI) form a helical membrane-spanning segment. At 82–89 (HCDAHLHT) the chain is on the cytoplasmic side. A helical membrane pass occupies residues 90–111 (PMYFFISQLSLMDMAYISVTVP). The Extracellular portion of the chain corresponds to 112–132 (KMLLDQVMGVNKISAPECGMQ). Cys-129 and Cys-221 are disulfide-bonded. The chain crosses the membrane as a helical span at residues 133–152 (MFFYVTLAGSEFFLLATMAY). At 153–171 (DRYVAICHPLRYPVLMNHR) the chain is on the cytoplasmic side. A helical transmembrane segment spans residues 172–190 (VCLFLSSGCWFLGSVDGFT). Residues 191 to 227 (FTPITMTFPFRGSREIHHFFCEVPAVLNLSCSDTSLY) lie on the Extracellular side of the membrane. N-linked (GlcNAc...) asparagine glycosylation occurs at Asn-218. A helical membrane pass occupies residues 228-251 (EIFMYLCCVLMLLIPVVIISSSYL). Residues 252 to 268 (LILLTIHGMNSAEGRKK) lie on the Cytoplasmic side of the membrane. The helical transmembrane segment at 269-291 (AFATCSSHLTVVILFYGAAIYTY) threads the bilayer. Over 292 to 304 (MLPSSYHTPEKDM) the chain is Extracellular. Residues 305 to 324 (MVSVFYTILTPVVNPLIYSL) traverse the membrane as a helical segment. Topologically, residues 325 to 348 (RNKDVMGALKKMLTVEPAFQKAME) are cytoplasmic.

Belongs to the G-protein coupled receptor 1 family.

The protein resides in the cell membrane. Odorant receptor. This is Olfactory receptor 2T4 (OR2T4) from Homo sapiens (Human).